The primary structure comprises 475 residues: Ribulose bisphosphate carboxylase large chain (475 aa).

Positions 1-2 (MS) are excised as a propeptide. An N-acetylproline modification is found at proline 3. Lysine 14 carries the post-translational modification N6,N6,N6-trimethyllysine. Substrate contacts are provided by asparagine 123 and threonine 173. Lysine 175 serves as the catalytic Proton acceptor. Lysine 177 lines the substrate pocket. Positions 201, 203, and 204 each coordinate Mg(2+). Residue lysine 201 is modified to N6-carboxylysine. Histidine 294 acts as the Proton acceptor in catalysis. Substrate is bound by residues arginine 295, histidine 327, and serine 379.

The protein belongs to the RuBisCO large chain family. Type I subfamily. As to quaternary structure, heterohexadecamer of 8 large chains and 8 small chains; disulfide-linked. The disulfide link is formed within the large subunit homodimers. Mg(2+) serves as cofactor. Post-translationally, the disulfide bond which can form in the large chain dimeric partners within the hexadecamer appears to be associated with oxidative stress and protein turnover.

The protein localises to the plastid. It localises to the chloroplast. It carries out the reaction 2 (2R)-3-phosphoglycerate + 2 H(+) = D-ribulose 1,5-bisphosphate + CO2 + H2O. The enzyme catalyses D-ribulose 1,5-bisphosphate + O2 = 2-phosphoglycolate + (2R)-3-phosphoglycerate + 2 H(+). RuBisCO catalyzes two reactions: the carboxylation of D-ribulose 1,5-bisphosphate, the primary event in carbon dioxide fixation, as well as the oxidative fragmentation of the pentose substrate in the photorespiration process. Both reactions occur simultaneously and in competition at the same active site. The polypeptide is Ribulose bisphosphate carboxylase large chain (Pinus thunbergii (Japanese black pine)).